The following is a 213-amino-acid chain: Thymidylate kinase (213 aa).

ATP is bound at residue 10–17 (GIDGCGKT).

Belongs to the thymidylate kinase family.

It catalyses the reaction dTMP + ATP = dTDP + ADP. Phosphorylation of dTMP to form dTDP in both de novo and salvage pathways of dTTP synthesis. The chain is Thymidylate kinase from Synechococcus sp. (strain WH7803).